A 132-amino-acid chain; its full sequence is Small ribosomal subunit protein uS8 (132 aa).

It belongs to the universal ribosomal protein uS8 family. Part of the 30S ribosomal subunit. Contacts proteins S5 and S12.

One of the primary rRNA binding proteins, it binds directly to 16S rRNA central domain where it helps coordinate assembly of the platform of the 30S subunit. This Coprothermobacter proteolyticus (strain ATCC 35245 / DSM 5265 / OCM 4 / BT) protein is Small ribosomal subunit protein uS8.